Consider the following 447-residue polypeptide: uncharacterized protein (447 aa).

The next 12 helical transmembrane spans lie at 17 to 37 (IMMM…SSSA), 40 to 60 (VAGP…LFIM), 95 to 115 (IYWK…AIFI), 118 to 138 (WLPG…VTIV), 154 to 174 (AMIK…LLFV), 200 to 220 (GLIT…IIGV), 243 to 263 (IVAF…WNQV), 289 to 311 (AVIL…RILY), 333 to 353 (MFAI…SLFA), 361 to 381 (LMGS…FAHL), 393 to 415 (YYVK…ILIG), and 419 to 441 (TTSI…AYLV).

This sequence belongs to the amino acid-polyamine-organocation (APC) superfamily.

The protein resides in the cell membrane. In terms of biological role, may participate in leucine metabolism. May transport leucine or a compound related to leucine metabolism. This is an uncharacterized protein from Bacillus subtilis (strain 168).